The chain runs to 793 residues: Transcription factor opdR (793 aa).

3 disordered regions span residues 1-29 (MAQD…DPCR), 60-113 (TASS…QSQN), and 457-476 (LDDE…QPSE). A DNA-binding region (zn(2)-C6 fungal-type) is located at residues 25–53 (CDPCRRRKVRCDRKFPCGQCERARTALQC).

It is found in the nucleus. Its function is as follows. Transcription factor; part of the gene cluster that mediates the biosynthesis of oxopyrrolidines, polyketide-amino acid hybrid compounds with feature structures of tetramic acid. This is Transcription factor opdR from Penicillium oxalicum (strain 114-2 / CGMCC 5302) (Penicillium decumbens).